Reading from the N-terminus, the 429-residue chain is Ribosomal RNA small subunit methyltransferase B (429 aa).

Residues 254 to 260 (CAAPGGK), aspartate 277, aspartate 303, and aspartate 322 each bind S-adenosyl-L-methionine. The active-site Nucleophile is the cysteine 375.

This sequence belongs to the class I-like SAM-binding methyltransferase superfamily. RsmB/NOP family.

The protein localises to the cytoplasm. It catalyses the reaction cytidine(967) in 16S rRNA + S-adenosyl-L-methionine = 5-methylcytidine(967) in 16S rRNA + S-adenosyl-L-homocysteine + H(+). In terms of biological role, specifically methylates the cytosine at position 967 (m5C967) of 16S rRNA. In Escherichia coli (strain UTI89 / UPEC), this protein is Ribosomal RNA small subunit methyltransferase B.